Reading from the N-terminus, the 599-residue chain is Membrane protein insertase YidC (599 aa).

A helical membrane pass occupies residues 6–26 (NYFIAIALSVVIVLAWQFLYM). The segment at 35 to 78 (RAEEARQAQQQTTQQQPAPGAAPGATVEGAPPASSTQAAATATR) is disordered. The span at 41 to 76 (QAQQQTTQQQPAPGAAPGATVEGAPPASSTQAAATA) shows a compositional bias: low complexity. 4 helical membrane passes run 378–398 (FGVAILLTTIVVKALFFPLAS), 448–468 (WPMLLQIPVFFALYKVIYVTI), 501–521 (VPHFLMIGVWPLVMGITMFLQ), and 536–556 (IFTWMPLIFTFMLASFPAGLV).

It belongs to the OXA1/ALB3/YidC family. Type 1 subfamily. In terms of assembly, interacts with the Sec translocase complex via SecD. Specifically interacts with transmembrane segments of nascent integral membrane proteins during membrane integration.

Its subcellular location is the cell inner membrane. Functionally, required for the insertion and/or proper folding and/or complex formation of integral membrane proteins into the membrane. Involved in integration of membrane proteins that insert both dependently and independently of the Sec translocase complex, as well as at least some lipoproteins. Aids folding of multispanning membrane proteins. This chain is Membrane protein insertase YidC, found in Agrobacterium fabrum (strain C58 / ATCC 33970) (Agrobacterium tumefaciens (strain C58)).